The chain runs to 835 residues: Peptide transporter family 1 (835 aa).

11 helical membrane-spanning segments follow: residues 86 to 106 (IFFN…SIVA), 113 to 133 (FWTI…LALA), 150 to 170 (GLLI…AFGG), 183 to 203 (LFFS…TFIS), 222 to 242 (FGIP…GSFW), 325 to 345 (MFLP…VWLI), 368 to 388 (LNAV…YPVA), 401 to 421 (VTGG…QLQV), 697 to 717 (ILWQ…FSIT), 738 to 758 (WLLT…LNLF), and 765 to 785 (FFVY…LSIF). The segment at 814–835 (PRYSIDNKGFHPDEKDTFDMHF) is disordered. A compositionally biased stretch (basic and acidic residues) spans 821–835 (KGFHPDEKDTFDMHF).

This sequence belongs to the major facilitator superfamily. Proton-dependent oligopeptide transporter (POT/PTR) (TC 2.A.17) family. As to expression, expressed specifically in the intestine.

It localises to the apical cell membrane. In terms of biological role, low-affinity peptide transporter that is necessary for proton-dependent uptake of di- or tripeptides, and to a minor extent tetrapeptides, in the intestine. Transport is independent of sodium and chloride ions. Controls the uptake of dietary fatty acids, plays a role in fatty acid synthesis and is responsible for dipeptide-induced acidification of the intestine. Regulates cellular pH differences together with the antiporter protein, nhx-2. Amino acid uptake and absorption levels influence the insulin signaling/daf-2 and let-363/TOR pathways, subsequently affecting the stress response and longevity of the organism. It is required for the uptake of the L-enantiomers of various amino acids, including L-glutamate. In response to the availability of amino acid nutrients, may play a role in promoting reproduction and fertility. The polypeptide is Peptide transporter family 1 (Caenorhabditis elegans).